Reading from the N-terminus, the 223-residue chain is Deoxyribose-phosphate aldolase (223 aa).

Residue Asp-92 is the Proton donor/acceptor of the active site. The active-site Schiff-base intermediate with acetaldehyde is Lys-158. The active-site Proton donor/acceptor is the Lys-188.

Belongs to the DeoC/FbaB aldolase family. DeoC type 1 subfamily.

It is found in the cytoplasm. The enzyme catalyses 2-deoxy-D-ribose 5-phosphate = D-glyceraldehyde 3-phosphate + acetaldehyde. It participates in carbohydrate degradation; 2-deoxy-D-ribose 1-phosphate degradation; D-glyceraldehyde 3-phosphate and acetaldehyde from 2-deoxy-alpha-D-ribose 1-phosphate: step 2/2. In terms of biological role, catalyzes a reversible aldol reaction between acetaldehyde and D-glyceraldehyde 3-phosphate to generate 2-deoxy-D-ribose 5-phosphate. This is Deoxyribose-phosphate aldolase from Mycolicibacterium paratuberculosis (strain ATCC BAA-968 / K-10) (Mycobacterium paratuberculosis).